The following is a 467-amino-acid chain: MSANTFIHDNFLLENKYAEELYHNYSKNQPIIDYHNHLNPQFIAEDKIFDNITNVWINGDHYKWRAMRTLGIDEQFVTGNGSDKDKFLNWAKTVPYTMRNPLYHWTHLELARYFDIYDLLNEKSAEKIYTETTEKINSQAYSTQNLLKKVNAELVCTTEDPIDSLEFHKKFANNSTGIKMSTAFRPDKAILIANDGYNAYLDTLGDVSGVAINTFADLQAALRNRIEFFNANGCKLSDHGLDQIYFEDFTESEISSIFKKKRENRIITPEEALKFQSAVLIFLSETYHEFGWVQQFHLGALRNNNARMHRILGPDTGWDSIGDYPQAQKLSSFLNALDSKDKLTKTIIYNLNPADNEVMATMIGNFNDGSVRGKVQFGSGWWFLDQKDGMTKQLNALSNMGLISCFVGMLTDSRSFLSFPRHEYFRRILCNLLGDEIKRGELPNDMEWIGKLVADISYNNAKEYFKF.

It belongs to the metallo-dependent hydrolases superfamily. Uronate isomerase family.

The enzyme catalyses D-glucuronate = D-fructuronate. It catalyses the reaction aldehydo-D-galacturonate = keto-D-tagaturonate. It participates in carbohydrate metabolism; pentose and glucuronate interconversion. The protein is Uronate isomerase of Flavobacterium johnsoniae (strain ATCC 17061 / DSM 2064 / JCM 8514 / BCRC 14874 / CCUG 350202 / NBRC 14942 / NCIMB 11054 / UW101) (Cytophaga johnsonae).